A 456-amino-acid chain; its full sequence is Alcohol acyl transferase 1 allele GSc (456 aa).

Residues His-165 and Asn-386 each act as proton acceptor in the active site.

It belongs to the plant acyltransferase family. As to expression, expressed at very low levels in the skin of ripe fruit.

Its function is as follows. Involved in the biosynthesis of volatile esters which confer ripe apple fruit flavor. Alcohol acyl transferase that can use a wide range of alcohols as substrate to produce esters. The polypeptide is Alcohol acyl transferase 1 allele GSc (Malus domestica (Apple)).